The primary structure comprises 1461 residues: Gag-Pol polyprotein (1461 aa).

G2 is lipidated: N-myristoyl glycine; by host. Residues 7–31 are interaction with Gp41; sequence VLRGKKADELEKIRLRPGGKKKYKL. A Nuclear export signal motif is present at residues 16 to 22; that stretch reads LEKIRLR. Positions 26-32 match the Nuclear localization signal motif; the sequence is KKKYKLK. Positions 189–226 are interaction with human PPIA/CYPA and NUP153; sequence NCVGDHQAAMQIIREIINEEAADWDVAHPIPGPLPAGQ. Residues 277–363 are dimerization/Multimerization of capsid protein p24; that stretch reads YNPTNILDIN…GGPGQKARLM (87 aa). CCHC-type zinc fingers lie at residues 387-404 and 408-425; these read FKCW…QWSA and QGCW…NCPD. Positions 436–467 are disordered; the sequence is LGKEGPQLPRGPSPAGANTNSTPIGSSSGPTG. Residues 453 to 467 show a composition bias toward low complexity; sequence NTNSTPIGSSSGPTG. Positions 511-515 are dimerization of protease; the sequence is PQFSL. The Peptidase A2 domain occupies 530-599; sequence VEVLLDTRAN…TPINIFGRNV (70 aa). Residue D535 is the For protease activity; shared with dimeric partner of the active site. 2 dimerization of protease regions span residues 559–565 and 598–610; these read GIGGFIN and NVLT…LNLP. The 191-residue stretch at 653–843 folds into the Reverse transcriptase domain; that stretch reads EGQLEEAPPT…PPYRWMGYEL (191 aa). 3 residues coordinate Mg(2+): D719, D794, and D795. Residues 836-844 form an RT 'primer grip' region; it reads YRWMGYELW. The Tryptophan repeat motif motif lies at 1006 to 1022; the sequence is WEQWWDNYWQVTWIPDW. The region spanning 1042-1165 is the RNase H type-1 domain; it reads VPGAETFYTD…VDHLVSQGIR (124 aa). Residues D1051, E1086, D1106, and D1157 each coordinate Mg(2+). An Integrase-type; degenerate zinc finger spans residues 1171 to 1212; the sequence is EKIEPAQEEHEKYHSNIKELSHKFGIPKLVARQIVNTCAHVQ. An Integrase catalytic domain is found at 1221 to 1372; the sequence is QVNAELGTWQ…TPAERIINMI (152 aa). Residues D1232, D1284, and E1320 each contribute to the Mg(2+) site. The segment at residues 1391-1438 is a DNA-binding region (integrase-type); sequence FRVYFREGRDQLWKGPGELLWKGDGAVIVKVGTEIKVVPRRKAKIIKD.

As to quaternary structure, homotrimer; further assembles as hexamers of trimers. Interacts with gp41 (via C-terminus). Interacts with host CALM1; this interaction induces a conformational change in the Matrix protein, triggering exposure of the myristate group. Interacts with host AP3D1; this interaction allows the polyprotein trafficking to multivesicular bodies during virus assembly. Part of the pre-integration complex (PIC) which is composed of viral genome, matrix protein, Vpr and integrase. In terms of assembly, homodimer; the homodimer further multimerizes as homohexamers or homopentamers. Interacts with human PPIA/CYPA. Interacts with human NUP153. Interacts with host PDZD8; this interaction stabilizes the capsid. Interacts with monkey TRIM5; this interaction destabilizes the capsid. Homodimer, whose active site consists of two apposed aspartic acid residues. As to quaternary structure, heterodimer of p66 RT and p51 RT (RT p66/p51). Heterodimerization of RT is essential for DNA polymerase activity. The overall folding of the subdomains is similar in p66 RT and p51 RT but the spatial arrangements of the subdomains are dramatically different. In terms of assembly, homotetramer; may further associate as a homohexadecamer. Part of the pre-integration complex (PIC) which is composed of viral genome, matrix protein, Vpr and integrase. Interacts with human SMARCB1/INI1 and human PSIP1/LEDGF isoform 1. Interacts with human KPNA3; this interaction might play a role in nuclear import of the pre-integration complex. Interacts with human NUP153; this interaction might play a role in nuclear import of the pre-integration complex. It depends on Mg(2+) as a cofactor. Post-translationally, specific enzymatic cleavages by the viral protease yield mature proteins. The protease is released by autocatalytic cleavage. The polyprotein is cleaved during and after budding, this process is termed maturation. Proteolytic cleavage of p66 RT removes the RNase H domain to yield the p51 RT subunit. Nucleocapsid protein p7 might be further cleaved after virus entry.

The protein resides in the host cell membrane. It is found in the host endosome. The protein localises to the host multivesicular body. It localises to the virion membrane. Its subcellular location is the host nucleus. The protein resides in the host cytoplasm. It is found in the virion. The catalysed reaction is Endopeptidase for which the P1 residue is preferably hydrophobic.. It catalyses the reaction Endohydrolysis of RNA in RNA/DNA hybrids. Three different cleavage modes: 1. sequence-specific internal cleavage of RNA. Human immunodeficiency virus type 1 and Moloney murine leukemia virus enzymes prefer to cleave the RNA strand one nucleotide away from the RNA-DNA junction. 2. RNA 5'-end directed cleavage 13-19 nucleotides from the RNA end. 3. DNA 3'-end directed cleavage 15-20 nucleotides away from the primer terminus.. It carries out the reaction 3'-end directed exonucleolytic cleavage of viral RNA-DNA hybrid.. The enzyme catalyses DNA(n) + a 2'-deoxyribonucleoside 5'-triphosphate = DNA(n+1) + diphosphate. Protease: The viral protease is inhibited by many synthetic protease inhibitors (PIs), such as amprenavir, atazanavir, indinavir, loprinavir, nelfinavir, ritonavir and saquinavir. Use of protease inhibitors in tritherapy regimens permit more ambitious therapeutic strategies. Reverse transcriptase/ribonuclease H: RT can be inhibited either by nucleoside RT inhibitors (NRTIs) or by non nucleoside RT inhibitors (NNRTIs). NRTIs act as chain terminators, whereas NNRTIs inhibit DNA polymerization by binding a small hydrophobic pocket near the RT active site and inducing an allosteric change in this region. Classical NRTIs are abacavir, adefovir (PMEA), didanosine (ddI), lamivudine (3TC), stavudine (d4T), tenofovir (PMPA), zalcitabine (ddC), and zidovudine (AZT). Classical NNRTIs are atevirdine (BHAP U-87201E), delavirdine, efavirenz (DMP-266), emivirine (I-EBU), and nevirapine (BI-RG-587). The tritherapies used as a basic effective treatment of AIDS associate two NRTIs and one NNRTI. In terms of biological role, mediates, with Gag polyprotein, the essential events in virion assembly, including binding the plasma membrane, making the protein-protein interactions necessary to create spherical particles, recruiting the viral Env proteins, and packaging the genomic RNA via direct interactions with the RNA packaging sequence (Psi). Gag-Pol polyprotein may regulate its own translation, by the binding genomic RNA in the 5'-UTR. At low concentration, the polyprotein would promote translation, whereas at high concentration, the polyprotein would encapsidate genomic RNA and then shut off translation. Functionally, targets the polyprotein to the plasma membrane via a multipartite membrane-binding signal, that includes its myristoylated N-terminus. Matrix protein is part of the pre-integration complex. Implicated in the release from host cell mediated by Vpu. Binds to RNA. Its function is as follows. Forms the conical core that encapsulates the genomic RNA-nucleocapsid complex in the virion. Most core are conical, with only 7% tubular. The core is constituted by capsid protein hexamer subunits. The core is disassembled soon after virion entry. Host restriction factors such as TRIM5-alpha or TRIMCyp bind retroviral capsids and cause premature capsid disassembly, leading to blocks in reverse transcription. Capsid restriction by TRIM5 is one of the factors which restricts HIV-1 to the human species. Host PIN1 apparently facilitates the virion uncoating. On the other hand, interactions with PDZD8 or CYPA stabilize the capsid. Encapsulates and protects viral dimeric unspliced genomic RNA (gRNA). Binds these RNAs through its zinc fingers. Acts as a nucleic acid chaperone which is involved in rearangement of nucleic acid secondary structure during gRNA retrotranscription. Also facilitates template switch leading to recombination. As part of the polyprotein, participates in gRNA dimerization, packaging, tRNA incorporation and virion assembly. In terms of biological role, aspartyl protease that mediates proteolytic cleavages of Gag and Gag-Pol polyproteins during or shortly after the release of the virion from the plasma membrane. Cleavages take place as an ordered, step-wise cascade to yield mature proteins. This process is called maturation. Displays maximal activity during the budding process just prior to particle release from the cell. Also cleaves Nef and Vif, probably concomitantly with viral structural proteins on maturation of virus particles. Hydrolyzes host EIF4GI and PABP1 in order to shut off the capped cellular mRNA translation. The resulting inhibition of cellular protein synthesis serves to ensure maximal viral gene expression and to evade host immune response. Functionally, multifunctional enzyme that converts the viral RNA genome into dsDNA in the cytoplasm, shortly after virus entry into the cell. This enzyme displays a DNA polymerase activity that can copy either DNA or RNA templates, and a ribonuclease H (RNase H) activity that cleaves the RNA strand of RNA-DNA heteroduplexes in a partially processive 3' to 5' endonucleasic mode. Conversion of viral genomic RNA into dsDNA requires many steps. A tRNA(3)-Lys binds to the primer-binding site (PBS) situated at the 5'-end of the viral RNA. RT uses the 3' end of the tRNA primer to perform a short round of RNA-dependent minus-strand DNA synthesis. The reading proceeds through the U5 region and ends after the repeated (R) region which is present at both ends of viral RNA. The portion of the RNA-DNA heteroduplex is digested by the RNase H, resulting in a ssDNA product attached to the tRNA primer. This ssDNA/tRNA hybridizes with the identical R region situated at the 3' end of viral RNA. This template exchange, known as minus-strand DNA strong stop transfer, can be either intra- or intermolecular. RT uses the 3' end of this newly synthesized short ssDNA to perform the RNA-dependent minus-strand DNA synthesis of the whole template. RNase H digests the RNA template except for two polypurine tracts (PPTs) situated at the 5'-end and near the center of the genome. It is not clear if both polymerase and RNase H activities are simultaneous. RNase H probably can proceed both in a polymerase-dependent (RNA cut into small fragments by the same RT performing DNA synthesis) and a polymerase-independent mode (cleavage of remaining RNA fragments by free RTs). Secondly, RT performs DNA-directed plus-strand DNA synthesis using the PPTs that have not been removed by RNase H as primers. PPTs and tRNA primers are then removed by RNase H. The 3' and 5' ssDNA PBS regions hybridize to form a circular dsDNA intermediate. Strand displacement synthesis by RT to the PBS and PPT ends produces a blunt ended, linear dsDNA copy of the viral genome that includes long terminal repeats (LTRs) at both ends. Its function is as follows. Catalyzes viral DNA integration into the host chromosome, by performing a series of DNA cutting and joining reactions. This enzyme activity takes place after virion entry into a cell and reverse transcription of the RNA genome in dsDNA. The first step in the integration process is 3' processing. This step requires a complex comprising the viral genome, matrix protein, Vpr and integrase. This complex is called the pre-integration complex (PIC). The integrase protein removes 2 nucleotides from each 3' end of the viral DNA, leaving recessed CA OH's at the 3' ends. In the second step, the PIC enters cell nucleus. This process is mediated through integrase and Vpr proteins, and allows the virus to infect a non dividing cell. This ability to enter the nucleus is specific of lentiviruses, other retroviruses cannot and rely on cell division to access cell chromosomes. In the third step, termed strand transfer, the integrase protein joins the previously processed 3' ends to the 5' ends of strands of target cellular DNA at the site of integration. The 5'-ends are produced by integrase-catalyzed staggered cuts, 5 bp apart. A Y-shaped, gapped, recombination intermediate results, with the 5'-ends of the viral DNA strands and the 3' ends of target DNA strands remaining unjoined, flanking a gap of 5 bp. The last step is viral DNA integration into host chromosome. This involves host DNA repair synthesis in which the 5 bp gaps between the unjoined strands are filled in and then ligated. Since this process occurs at both cuts flanking the HIV genome, a 5 bp duplication of host DNA is produced at the ends of HIV-1 integration. Alternatively, Integrase may catalyze the excision of viral DNA just after strand transfer, this is termed disintegration. The protein is Gag-Pol polyprotein (gag-pol) of Homo sapiens (Human).